A 424-amino-acid chain; its full sequence is MKIERIRGGVSLRRTIESGTEEQRRAVLDIIANVRDRGDAALKEYTERFDGVKLDSLKVTEEEMKRAHAAMDAEMLEIIRQAAANIRDYHKRQKRESWWMTKEDGTILGQKVTPLDAVGLYVPGGTAAYPSSVLMNVIPAQVAGVKRIVITSPPNKDGTLPAGVLAAAYELGVTEIYKVGGAQAIAALAYGTETIRPVDKIFGPGNIYVALAKREVFGHVAIDMIAGPSEIVVLADETARPDEIAADLLSQAEHDVRASAILVTPSMKLALAVASEVERQLETLPRRDIAQAALENYGAIYVTETLEEAVDVVNELAPEHLEVMTAEPLALFGRLRHAGAMFFGRFSSEPVGDYFAGPNHVLPTNGTARFSSGLSVDEFVKKSSVIVYSETALKQHGDKIAAFARLEGLEAHARAIEVRLEKGE.

3 residues coordinate NAD(+): Y121, Q183, and N206. 3 residues coordinate substrate: S229, Q251, and H254. Positions 251 and 254 each coordinate Zn(2+). Active-site proton acceptor residues include E319 and H320. Residues H320, D353, E407, and H412 each contribute to the substrate site. Residue D353 participates in Zn(2+) binding. Zn(2+) is bound at residue H412.

It belongs to the histidinol dehydrogenase family. Zn(2+) is required as a cofactor.

It carries out the reaction L-histidinol + 2 NAD(+) + H2O = L-histidine + 2 NADH + 3 H(+). It functions in the pathway amino-acid biosynthesis; L-histidine biosynthesis; L-histidine from 5-phospho-alpha-D-ribose 1-diphosphate: step 9/9. Functionally, catalyzes the sequential NAD-dependent oxidations of L-histidinol to L-histidinaldehyde and then to L-histidine. The chain is Histidinol dehydrogenase from Geobacillus kaustophilus (strain HTA426).